Consider the following 595-residue polypeptide: Alginate biosynthesis sensor protein KinB (595 aa).

Over 1 to 12 (MSMPLPMKLRTR) the chain is Cytoplasmic. Residues 13 to 33 (LFLSISALITVSLFGLLLGLF) traverse the membrane as a helical segment. Residues 34–167 (SVMQLGRAQE…SDAETSARHR (134 aa)) are Periplasmic-facing. Residues 168–188 (AYLVAGLLGLVGVAILLIGFV) form a helical membrane-spanning segment. Topologically, residues 189–595 (TAHSIARRFG…GARFYMLLPV (407 aa)) are cytoplasmic. In terms of domain architecture, HAMP spans 195-247 (RRFGAPIETLARAADRIGEGDFDVTLPMTNVAEVGQLTRRFGLMAEALRQYRK). The 66-residue stretch at 258-323 (RRLQAVLDSI…AVEKALLGEV (66 aa)) folds into the PAS domain. Residues 327 to 369 (AMPDLVVDVAGESRLLAWSLYPVTHPGGHSVGAVLVVRDVTEQ) form the PAC domain. Residues 382-595 (RASHELRTPV…GARFYMLLPV (214 aa)) form the Histidine kinase domain. His-385 is subject to Phosphohistidine; by autocatalysis.

Autophosphorylated.

It localises to the cell inner membrane. It catalyses the reaction ATP + protein L-histidine = ADP + protein N-phospho-L-histidine.. Its function is as follows. Member of the two-component regulatory system AlgB/KinB involved in regulation of alginate biosynthesis genes. KinB functions as a membrane-associated protein kinase that phosphorylates AlgB, probably in response to environmental signals. This is Alginate biosynthesis sensor protein KinB (kinB) from Pseudomonas aeruginosa.